A 590-amino-acid polypeptide reads, in one-letter code: Aspartate--tRNA(Asp/Asn) ligase (590 aa).

Glu176 serves as a coordination point for L-aspartate. The segment at 200-203 (QLFK) is aspartate. L-aspartate is bound by residues Arg222 and His451. 222-224 (RDE) serves as a coordination point for ATP. Residue Glu485 coordinates ATP. Arg492 contacts L-aspartate. 537–540 (GIDR) provides a ligand contact to ATP.

This sequence belongs to the class-II aminoacyl-tRNA synthetase family. Type 1 subfamily. In terms of assembly, homodimer.

It is found in the cytoplasm. It carries out the reaction tRNA(Asx) + L-aspartate + ATP = L-aspartyl-tRNA(Asx) + AMP + diphosphate. Its function is as follows. Aspartyl-tRNA synthetase with relaxed tRNA specificity since it is able to aspartylate not only its cognate tRNA(Asp) but also tRNA(Asn). Reaction proceeds in two steps: L-aspartate is first activated by ATP to form Asp-AMP and then transferred to the acceptor end of tRNA(Asp/Asn). This chain is Aspartate--tRNA(Asp/Asn) ligase, found in Ehrlichia ruminantium (strain Gardel).